Reading from the N-terminus, the 61-residue chain is Small ribosomal subunit protein uS14 (61 aa).

Cys-24, Cys-27, Cys-40, and Cys-43 together coordinate Zn(2+).

Belongs to the universal ribosomal protein uS14 family. Zinc-binding uS14 subfamily. In terms of assembly, part of the 30S ribosomal subunit. Contacts proteins S3 and S10. It depends on Zn(2+) as a cofactor.

Binds 16S rRNA, required for the assembly of 30S particles and may also be responsible for determining the conformation of the 16S rRNA at the A site. This chain is Small ribosomal subunit protein uS14, found in Mycoplasmoides gallisepticum (strain R(low / passage 15 / clone 2)) (Mycoplasma gallisepticum).